We begin with the raw amino-acid sequence, 541 residues long: EH domain-containing protein 4 (541 aa).

Methionine 1 is subject to N-acetylmethionine. Residues 1–20 (MFSWMGRQAGGRERSGGMDA) form a disordered region. At serine 15 the chain carries Phosphoserine. The Dynamin-type G domain maps to 58-289 (FENKPMILLV…DLFRDIQSLP (232 aa)). The interval 68–75 (GQYSTGKT) is G1 motif. 68–75 (GQYSTGKT) is an ATP binding site. A G2 motif region spans residues 94–95 (EP). The interval 156-159 (DSPG) is G3 motif. Serine 162 is subject to Phosphoserine. A G4 motif region spans residues 222–225 (NKAD). Lysine 223 contributes to the ATP binding site. Position 246 (valine 246) is a region of interest, G5 motif. Residue tryptophan 261 participates in ATP binding. Residues 447–535 (DKPVYDELFY…PHLVPPSHRK (89 aa)) form the EH domain. Position 451 is a phosphotyrosine (tyrosine 451). Position 459 is a phosphoserine (serine 459). The region spanning 479 to 514 (LPNSVLGKIWKLADCDCDGMLDEEEFALAKHLIKIK) is the EF-hand domain. Ca(2+) contacts are provided by aspartate 492, aspartate 494, aspartate 496, methionine 498, and glutamate 503.

It belongs to the TRAFAC class dynamin-like GTPase superfamily. Dynamin/Fzo/YdjA family. EHD subfamily. In terms of assembly, homooligomer, and heterooligomer with EHD1, EHD2 and EHD3. Forms a complex with EHD4 and MICALL1; the complex controls CDH5 trafficking and coordinates angiogenesis.

The protein localises to the early endosome membrane. Its subcellular location is the recycling endosome membrane. It localises to the cell membrane. The protein resides in the cell junction. It is found in the adherens junction. ATP- and membrane-binding protein that probably controls membrane reorganization/tubulation upon ATP hydrolysis. Plays a role in early endosomal transport. During sprouting angiogenesis, in complex with PACSIN2 and MICALL1, forms recycling endosome-like tubular structure at asymmetric adherens junctions to control CDH5 trafficking. This Mus musculus (Mouse) protein is EH domain-containing protein 4.